Consider the following 200-residue polypeptide: Large ribosomal subunit protein uL4 (200 aa).

Residues 38-68 (GRQGSKQQKTRSDVRGGGKRPWRQKGTGRAR) form a disordered region. Basic residues predominate over residues 54–65 (GGKRPWRQKGTG).

It belongs to the universal ribosomal protein uL4 family. In terms of assembly, part of the 50S ribosomal subunit.

Functionally, one of the primary rRNA binding proteins, this protein initially binds near the 5'-end of the 23S rRNA. It is important during the early stages of 50S assembly. It makes multiple contacts with different domains of the 23S rRNA in the assembled 50S subunit and ribosome. Its function is as follows. Forms part of the polypeptide exit tunnel. The polypeptide is Large ribosomal subunit protein uL4 (Pseudomonas savastanoi pv. phaseolicola (strain 1448A / Race 6) (Pseudomonas syringae pv. phaseolicola (strain 1448A / Race 6))).